Reading from the N-terminus, the 270-residue chain is UPF0354 protein BCA_4815 (270 aa).

The protein belongs to the UPF0354 family.

The chain is UPF0354 protein BCA_4815 from Bacillus cereus (strain 03BB102).